The sequence spans 284 residues: Sulfotransferase 2A6 (284 aa).

43–48 (KSGTNW) serves as a coordination point for 3'-phosphoadenylyl sulfate. Catalysis depends on His-98, which acts as the Proton acceptor. Residues Arg-120, Ser-128, Tyr-183, 217–222 (SSFQVM), and 246–248 (RNG) each bind 3'-phosphoadenylyl sulfate.

It belongs to the sulfotransferase 1 family. As to quaternary structure, oligomer. Liver, exhibiting a sex-dependent spatial localization in the lobule of the liver.

The protein resides in the cytoplasm. The protein localises to the cytosol. The catalysed reaction is an alcohol + 3'-phosphoadenylyl sulfate = an alkyl sulfate + adenosine 3',5'-bisphosphate + H(+). The enzyme catalyses glycolithocholate + 3'-phosphoadenylyl sulfate = sulfoglycolithocholate + adenosine 3',5'-bisphosphate + H(+). It carries out the reaction taurolithocholate + 3'-phosphoadenylyl sulfate = taurolithocholate 3-sulfate + adenosine 3',5'-bisphosphate + H(+). It catalyses the reaction 3beta-hydroxyandrost-5-en-17-one + 3'-phosphoadenylyl sulfate = dehydroepiandrosterone 3-sulfate + adenosine 3',5'-bisphosphate + H(+). The catalysed reaction is 3beta-hydroxy-5-cholenate + 3'-phosphoadenylyl sulfate = 3beta-sulfo-5-cholenate + adenosine 3',5'-bisphosphate + H(+). The enzyme catalyses deoxycholate + 3'-phosphoadenylyl sulfate = 3alpha-sulfodeoxycholate + adenosine 3',5'-bisphosphate + H(+). It carries out the reaction glycodeoxycholate + 3'-phosphoadenylyl sulfate = 3alpha-sulfoglycodeoxycholate + adenosine 3',5'-bisphosphate + H(+). It catalyses the reaction taurodeoxycholate + 3'-phosphoadenylyl sulfate = 3alpha-sulfotaurodeoxycholate + adenosine 3',5'-bisphosphate + H(+). Sulfotransferase that utilizes 3'-phospho-5'-adenylyl sulfate (PAPS) as sulfonate donor to catalyze the sulfonation of the hydroxyl group of hydroxysteroids and bile acids. Prefered substrates are dehydroepiandrosterone (DHEA, also known as 3beta-hydroxyandrost-5-en-17-one) and 3beta-hydroxy-5-cholenoate, but can also catalyze deoxycholate and its conjugates, and lithocholate conjugates, in vitro. This chain is Sulfotransferase 2A6, found in Rattus norvegicus (Rat).